The primary structure comprises 150 residues: D-aminoacyl-tRNA deacylase (150 aa).

Positions 138–139 match the Gly-cisPro motif, important for rejection of L-amino acids motif; sequence GP.

This sequence belongs to the DTD family. Homodimer.

Its subcellular location is the cytoplasm. It catalyses the reaction glycyl-tRNA(Ala) + H2O = tRNA(Ala) + glycine + H(+). The enzyme catalyses a D-aminoacyl-tRNA + H2O = a tRNA + a D-alpha-amino acid + H(+). Its function is as follows. An aminoacyl-tRNA editing enzyme that deacylates mischarged D-aminoacyl-tRNAs. Also deacylates mischarged glycyl-tRNA(Ala), protecting cells against glycine mischarging by AlaRS. Acts via tRNA-based rather than protein-based catalysis; rejects L-amino acids rather than detecting D-amino acids in the active site. By recycling D-aminoacyl-tRNA to D-amino acids and free tRNA molecules, this enzyme counteracts the toxicity associated with the formation of D-aminoacyl-tRNA entities in vivo and helps enforce protein L-homochirality. The protein is D-aminoacyl-tRNA deacylase of Flavobacterium psychrophilum (strain ATCC 49511 / DSM 21280 / CIP 103535 / JIP02/86).